The following is a 139-amino-acid chain: Large ribosomal subunit protein uL16 (139 aa).

It belongs to the universal ribosomal protein uL16 family. Part of the 50S ribosomal subunit.

Functionally, binds 23S rRNA and is also seen to make contacts with the A and possibly P site tRNAs. This is Large ribosomal subunit protein uL16 from Chlorobium phaeobacteroides (strain DSM 266 / SMG 266 / 2430).